Here is a 180-residue protein sequence, read N- to C-terminus: Stathmin-3 (180 aa).

2 S-palmitoyl cysteine lipidation sites follow: C22 and C24. Residues 38-180 (GDMEVKQLDK…NKEQREEMSG (143 aa)) form the SLD domain. Phosphoserine is present on residues S50, S60, S65, S68, S72, S73, and S81. The segment at 59–82 (KSPSDLSPESPMLSSPPKKKDTSL) is disordered. A compositionally biased stretch (low complexity) spans 60-74 (SPSDLSPESPMLSSP). The stretch at 76 to 179 (KKKDTSLEEL…RNKEQREEMS (104 aa)) forms a coiled coil.

Belongs to the stathmin family. Interacts with STAT3. Interacts with CLU (secreted form); this interaction may act as an important modulator during neuronal differentiation. Post-translationally, N-terminal palmitoylation promotes specific anchoring to the cytosolic leaflet of Golgi membranes and subsequent vesicular trafficking along dendrites and axons. Neuronal Stathmins are substrates for palmitoyltransferases ZDHHC3, ZDHHC7 and ZDHHC15.

The protein localises to the golgi apparatus. The protein resides in the cell projection. It is found in the growth cone. It localises to the axon. Its subcellular location is the cytoplasm. The protein localises to the cytosol. Functionally, exhibits microtubule-destabilizing activity, which is antagonized by STAT3. The chain is Stathmin-3 (STMN3) from Macaca fascicularis (Crab-eating macaque).